The sequence spans 137 residues: uncharacterized protein (137 aa).

The interval 116 to 137 is disordered; that stretch reads ARPPRGSGGTRTARNGARTASE. The span at 125–137 shows a compositional bias: polar residues; it reads TRTARNGARTASE.

This is an uncharacterized protein from Mycobacterium bovis (strain ATCC BAA-935 / AF2122/97).